The sequence spans 490 residues: Betaine aldehyde dehydrogenase (490 aa).

Asn93 contributes to the K(+) binding site. 150–152 (GAW) lines the NAD(+) pocket. The active-site Charge relay system is Lys162. 176–179 (KPSE) is an NAD(+) binding site. Val180 lines the K(+) pocket. 230 to 233 (GTAT) lines the NAD(+) pocket. A K(+)-binding site is contributed by Leu246. Residue Glu252 is the Proton acceptor of the active site. 3 residues coordinate NAD(+): Gly254, Cys286, and Glu387. Cys286 (nucleophile) is an active-site residue. At Cys286 the chain carries Cysteine sulfenic acid (-SOH). K(+)-binding residues include Lys457 and Gly460. The Charge relay system role is filled by Glu464.

This sequence belongs to the aldehyde dehydrogenase family. In terms of assembly, dimer of dimers. It depends on K(+) as a cofactor.

It carries out the reaction betaine aldehyde + NAD(+) + H2O = glycine betaine + NADH + 2 H(+). It functions in the pathway amine and polyamine biosynthesis; betaine biosynthesis via choline pathway; betaine from betaine aldehyde: step 1/1. In terms of biological role, involved in the biosynthesis of the osmoprotectant glycine betaine. Catalyzes the irreversible oxidation of betaine aldehyde to the corresponding acid. This chain is Betaine aldehyde dehydrogenase, found in Xanthomonas campestris pv. campestris (strain ATCC 33913 / DSM 3586 / NCPPB 528 / LMG 568 / P 25).